A 368-amino-acid polypeptide reads, in one-letter code: tRNA-specific 2-thiouridylase MnmA (368 aa).

ATP is bound by residues 24–31 (AMSGGVDS) and L50. C117 serves as the catalytic Nucleophile. C117 and C213 are joined by a disulfide. Position 141 (G141) interacts with ATP. The tract at residues 163–165 (KDQ) is interaction with tRNA. The active-site Cysteine persulfide intermediate is the C213.

The protein belongs to the MnmA/TRMU family.

The protein localises to the cytoplasm. It catalyses the reaction S-sulfanyl-L-cysteinyl-[protein] + uridine(34) in tRNA + AH2 + ATP = 2-thiouridine(34) in tRNA + L-cysteinyl-[protein] + A + AMP + diphosphate + H(+). Its function is as follows. Catalyzes the 2-thiolation of uridine at the wobble position (U34) of tRNA, leading to the formation of s(2)U34. The chain is tRNA-specific 2-thiouridylase MnmA from Wolbachia pipientis subsp. Culex pipiens (strain wPip).